We begin with the raw amino-acid sequence, 466 residues long: Ribulose bisphosphate carboxylase large chain (466 aa).

The residue at position 4 (lysine 4) is an N6,N6,N6-trimethyllysine. Substrate contacts are provided by asparagine 113 and threonine 163. Lysine 165 (proton acceptor) is an active-site residue. Substrate is bound at residue lysine 167. Residues lysine 191, aspartate 193, and glutamate 194 each contribute to the Mg(2+) site. Lysine 191 carries the post-translational modification N6-carboxylysine. Histidine 284 acts as the Proton acceptor in catalysis. Residues arginine 285, histidine 317, and serine 369 each contribute to the substrate site.

Belongs to the RuBisCO large chain family. Type I subfamily. Heterohexadecamer of 8 large chains and 8 small chains; disulfide-linked. The disulfide link is formed within the large subunit homodimers. Mg(2+) is required as a cofactor. In terms of processing, the disulfide bond which can form in the large chain dimeric partners within the hexadecamer appears to be associated with oxidative stress and protein turnover.

Its subcellular location is the plastid. The protein localises to the chloroplast. It carries out the reaction 2 (2R)-3-phosphoglycerate + 2 H(+) = D-ribulose 1,5-bisphosphate + CO2 + H2O. It catalyses the reaction D-ribulose 1,5-bisphosphate + O2 = 2-phosphoglycolate + (2R)-3-phosphoglycerate + 2 H(+). RuBisCO catalyzes two reactions: the carboxylation of D-ribulose 1,5-bisphosphate, the primary event in carbon dioxide fixation, as well as the oxidative fragmentation of the pentose substrate in the photorespiration process. Both reactions occur simultaneously and in competition at the same active site. This Justicia odora (Water willow) protein is Ribulose bisphosphate carboxylase large chain.